We begin with the raw amino-acid sequence, 262 residues long: Tryptophan synthase alpha chain (262 aa).

Active-site proton acceptor residues include E48 and D59.

Belongs to the TrpA family. Tetramer of two alpha and two beta chains.

The enzyme catalyses (1S,2R)-1-C-(indol-3-yl)glycerol 3-phosphate + L-serine = D-glyceraldehyde 3-phosphate + L-tryptophan + H2O. It functions in the pathway amino-acid biosynthesis; L-tryptophan biosynthesis; L-tryptophan from chorismate: step 5/5. Its function is as follows. The alpha subunit is responsible for the aldol cleavage of indoleglycerol phosphate to indole and glyceraldehyde 3-phosphate. The polypeptide is Tryptophan synthase alpha chain (Helicobacter pylori (strain J99 / ATCC 700824) (Campylobacter pylori J99)).